Here is a 182-residue protein sequence, read N- to C-terminus: ATP synthase subunit delta (182 aa).

This sequence belongs to the ATPase delta chain family. In terms of assembly, F-type ATPases have 2 components, F(1) - the catalytic core - and F(0) - the membrane proton channel. F(1) has five subunits: alpha(3), beta(3), gamma(1), delta(1), epsilon(1). F(0) has three main subunits: a(1), b(2) and c(10-14). The alpha and beta chains form an alternating ring which encloses part of the gamma chain. F(1) is attached to F(0) by a central stalk formed by the gamma and epsilon chains, while a peripheral stalk is formed by the delta and b chains.

Its subcellular location is the cell inner membrane. In terms of biological role, f(1)F(0) ATP synthase produces ATP from ADP in the presence of a proton or sodium gradient. F-type ATPases consist of two structural domains, F(1) containing the extramembraneous catalytic core and F(0) containing the membrane proton channel, linked together by a central stalk and a peripheral stalk. During catalysis, ATP synthesis in the catalytic domain of F(1) is coupled via a rotary mechanism of the central stalk subunits to proton translocation. This protein is part of the stalk that links CF(0) to CF(1). It either transmits conformational changes from CF(0) to CF(1) or is implicated in proton conduction. The sequence is that of ATP synthase subunit delta from Hydrogenobaculum sp. (strain Y04AAS1).